We begin with the raw amino-acid sequence, 496 residues long: Glycerol kinase (496 aa).

Thr11 provides a ligand contact to ADP. ATP contacts are provided by Thr11, Ser12, and Ser13. Residue Thr11 participates in sn-glycerol 3-phosphate binding. Residue Arg15 coordinates ADP. Sn-glycerol 3-phosphate-binding residues include Arg81, Glu82, Tyr133, and Asp242. Residues Arg81, Glu82, Tyr133, Asp242, and Gln243 each coordinate glycerol. Thr264 and Gly307 together coordinate ADP. Positions 264, 307, 311, and 412 each coordinate ATP. ADP contacts are provided by Gly412 and Asn416.

The protein belongs to the FGGY kinase family.

The catalysed reaction is glycerol + ATP = sn-glycerol 3-phosphate + ADP + H(+). It participates in polyol metabolism; glycerol degradation via glycerol kinase pathway; sn-glycerol 3-phosphate from glycerol: step 1/1. Inhibited by fructose 1,6-bisphosphate (FBP). Key enzyme in the regulation of glycerol uptake and metabolism. Catalyzes the phosphorylation of glycerol to yield sn-glycerol 3-phosphate. The protein is Glycerol kinase of Albidiferax ferrireducens (strain ATCC BAA-621 / DSM 15236 / T118) (Rhodoferax ferrireducens).